A 200-amino-acid polypeptide reads, in one-letter code: Cytochrome c biogenesis ATP-binding export protein CcmA (200 aa).

The region spanning 1–200 (MRLSGRGLRC…TREMRIGAAA (200 aa)) is the ABC transporter domain. ATP is bound at residue 35-42 (GRNGAGKT).

Belongs to the ABC transporter superfamily. CcmA exporter (TC 3.A.1.107) family. The complex is composed of two ATP-binding proteins (CcmA) and two transmembrane proteins (CcmB).

The protein localises to the cell inner membrane. It carries out the reaction heme b(in) + ATP + H2O = heme b(out) + ADP + phosphate + H(+). Functionally, part of the ABC transporter complex CcmAB involved in the biogenesis of c-type cytochromes; once thought to export heme, this seems not to be the case, but its exact role is uncertain. Responsible for energy coupling to the transport system. This chain is Cytochrome c biogenesis ATP-binding export protein CcmA, found in Rhodopseudomonas palustris (strain HaA2).